Consider the following 294-residue polypeptide: Homoserine kinase (294 aa).

84–94 (PFSRGLGSSSA) lines the ATP pocket.

Belongs to the GHMP kinase family. Homoserine kinase subfamily.

It is found in the cytoplasm. It carries out the reaction L-homoserine + ATP = O-phospho-L-homoserine + ADP + H(+). The protein operates within amino-acid biosynthesis; L-threonine biosynthesis; L-threonine from L-aspartate: step 4/5. Functionally, catalyzes the ATP-dependent phosphorylation of L-homoserine to L-homoserine phosphate. This chain is Homoserine kinase, found in Campylobacter concisus (strain 13826).